The following is a 714-amino-acid chain: Hormonally up-regulated neu tumor-associated kinase (714 aa).

Residues 1–15 are compositionally biased toward low complexity; that stretch reads MPAAAGDGLLGEPAA. The interval 1–26 is disordered; that stretch reads MPAAAGDGLLGEPAAPGGGGGAEDAA. The Protein kinase domain occupies 62 to 320; sequence LIGSRKLGEG…IQQALANRWL (259 aa). ATP is bound by residues 68 to 76 and lysine 91; that span reads LGEGSFAKV. Residue aspartate 186 is the Proton acceptor of the active site. Residues 437–461 are compositionally biased toward basic and acidic residues; that stretch reads KKPKEQEKRGDFLHRPFSKKLDKNL. 3 disordered regions span residues 437 to 471, 518 to 552, and 590 to 660; these read KKPK…SGSL, MEFI…HKED, and ARRN…VKSR. Low complexity predominate over residues 599 to 611; it reads LSPGLPSGSMSPL. Basic and acidic residues predominate over residues 623–635; that stretch reads AHEDKNSPPKEEG.

The protein belongs to the protein kinase superfamily. CAMK Ser/Thr protein kinase family. SNF1 subfamily.

It carries out the reaction L-seryl-[protein] + ATP = O-phospho-L-seryl-[protein] + ADP + H(+). The enzyme catalyses L-threonyl-[protein] + ATP = O-phospho-L-threonyl-[protein] + ADP + H(+). In Pan troglodytes (Chimpanzee), this protein is Hormonally up-regulated neu tumor-associated kinase (HUNK).